A 448-amino-acid chain; its full sequence is Protein W (448 aa).

Disordered regions lie at residues 26–104 and 193–406; these read KTYG…DPDD and FVPK…KKGA. 2 stretches are compositionally biased toward polar residues: residues 28-37 and 77-96; these read YGRSSIQQPS and DLSSVTSSDGTIGQRVSNTR. Acidic residues predominate over residues 240-252; it reads SDDEDENQLEYED. S257 is modified (phosphoserine; by host). A compositionally biased stretch (basic and acidic residues) spans 296-317; that stretch reads FPEKEETPDVRRKDSLMQDSCK. S350 carries the phosphoserine; by host modification.

This is Protein W (P/V/C) from Hendra virus (isolate Horse/Autralia/Hendra/1994).